Reading from the N-terminus, the 229-residue chain is Leucyl/phenylalanyl-tRNA--protein transferase (229 aa).

Belongs to the L/F-transferase family.

The protein localises to the cytoplasm. The catalysed reaction is N-terminal L-lysyl-[protein] + L-leucyl-tRNA(Leu) = N-terminal L-leucyl-L-lysyl-[protein] + tRNA(Leu) + H(+). The enzyme catalyses N-terminal L-arginyl-[protein] + L-leucyl-tRNA(Leu) = N-terminal L-leucyl-L-arginyl-[protein] + tRNA(Leu) + H(+). It carries out the reaction L-phenylalanyl-tRNA(Phe) + an N-terminal L-alpha-aminoacyl-[protein] = an N-terminal L-phenylalanyl-L-alpha-aminoacyl-[protein] + tRNA(Phe). Its function is as follows. Functions in the N-end rule pathway of protein degradation where it conjugates Leu, Phe and, less efficiently, Met from aminoacyl-tRNAs to the N-termini of proteins containing an N-terminal arginine or lysine. In Desulforapulum autotrophicum (strain ATCC 43914 / DSM 3382 / VKM B-1955 / HRM2) (Desulfobacterium autotrophicum), this protein is Leucyl/phenylalanyl-tRNA--protein transferase.